A 165-amino-acid chain; its full sequence is MESDPMFIGFGYDRHPLVEGRRLVLAGVEIDAPLGSLGHSDGDVLSHAIIDALLGAGCLGDIGTWFPETKEYKDANSLDLLKETVKILEERGFSVVNVDATVVASIVKLSPYREKIVENLKSALETSRVNVKFKSGNTLGFEGEERGISAYAVCLVEEKGCTKST.

A divalent metal cation is bound by residues Asp13 and His15. 4-CDP-2-C-methyl-D-erythritol 2-phosphate-binding positions include 13–15 (DRH) and 39–40 (HS). His47 serves as a coordination point for a divalent metal cation. 4-CDP-2-C-methyl-D-erythritol 2-phosphate contacts are provided by residues 61–63 (DIG) and Phe141.

The protein belongs to the IspF family. Homotrimer. Requires a divalent metal cation as cofactor.

It carries out the reaction 4-CDP-2-C-methyl-D-erythritol 2-phosphate = 2-C-methyl-D-erythritol 2,4-cyclic diphosphate + CMP. It functions in the pathway isoprenoid biosynthesis; isopentenyl diphosphate biosynthesis via DXP pathway; isopentenyl diphosphate from 1-deoxy-D-xylulose 5-phosphate: step 4/6. Involved in the biosynthesis of isopentenyl diphosphate (IPP) and dimethylallyl diphosphate (DMAPP), two major building blocks of isoprenoid compounds. Catalyzes the conversion of 4-diphosphocytidyl-2-C-methyl-D-erythritol 2-phosphate (CDP-ME2P) to 2-C-methyl-D-erythritol 2,4-cyclodiphosphate (ME-CPP) with a corresponding release of cytidine 5-monophosphate (CMP). The chain is 2-C-methyl-D-erythritol 2,4-cyclodiphosphate synthase from Thermotoga maritima (strain ATCC 43589 / DSM 3109 / JCM 10099 / NBRC 100826 / MSB8).